Reading from the N-terminus, the 179-residue chain is Protein TIFY 11a (179 aa).

One can recognise a Tify domain in the interval 62–97 (VDGGGQQFTIFYAGKVVVIDRCTPAMAAELMRFASA). A Jas motif is present at residues 115-140 (PIARKASLKRFLAKRKATPASARSSY). The short motif at 117 to 124 (ARKASLKR) is the Nuclear localization signal element.

This sequence belongs to the TIFY/JAZ family. As to quaternary structure, interacts with BHLH148. Interacts with COI1A in a coronatine-dependent manner. Interacts with COI1B in a coronatine-dependent manner. Coronatine is an analog of jasmonoyl isoleucine (JA-Ile). Interacts with RSS3. Forms a ternary complex with RSS3 and BHLH094 in the nucleus. Interacts with BHLH062 and NINJA1. Interacts with MYB30. In terms of processing, ubiquitinated. Targeted for degradation by the SCF(COI1) E3 ubiquitin ligase-proteasome pathway during jasmonate signaling.

It is found in the nucleus. Functionally, repressor of jasmonate (JA) responses. Forms a ternary complex with RSS3 and BHLH94 to negatively regulate JA-responsive genes. Acts as a positive regulator of tolerance to salt stress. Involved in salt tolerance by modulating potassium homeostasis through JA signaling and regulation of the expression of potassium ion transporter genes. Acts as a transcriptional regulator targeted by the SCF(COI1) E3 ubiquitin ligase complexes in the JA signaling pathway, and interacts with BHLH062 that may directly regulate the ion transporter genes. Acts as a positive regulator of tolerance to dehydration stress. Acts as a negative regulator of tolerance to cold stress by interacting with MYB30. The chain is Protein TIFY 11a from Oryza sativa subsp. japonica (Rice).